A 207-amino-acid chain; its full sequence is Small ribosomal subunit protein uS4A (207 aa).

One can recognise an S4 RNA-binding domain in the interval 98-161; sequence RRLDNVVYRM…REHKRIKELA (64 aa).

Belongs to the universal ribosomal protein uS4 family. As to quaternary structure, part of the 30S ribosomal subunit. Contacts protein S5. The interaction surface between S4 and S5 is involved in control of translational fidelity.

One of the primary rRNA binding proteins, it binds directly to 16S rRNA where it nucleates assembly of the body of the 30S subunit. Its function is as follows. With S5 and S12 plays an important role in translational accuracy. The protein is Small ribosomal subunit protein uS4A of Symbiobacterium thermophilum (strain DSM 24528 / JCM 14929 / IAM 14863 / T).